A 284-amino-acid chain; its full sequence is Trimeric intracellular cation channel type B (284 aa).

The Lumenal segment spans residues 1–15; that stretch reads MESFSELSLQFSQLS. The helical transmembrane segment at 16 to 32 threads the bilayer; the sequence is MFPFFETAHYLTSVMSA. Residues 33-44 are Cytoplasmic-facing; it reads REQAGAVDVASR. A helical transmembrane segment spans residues 45 to 68; sequence SPLASWFSSMLYCFGGGILSSILL. The Lumenal portion of the chain corresponds to 69–79; the sequence is AEPPVGILSNT. Residues 80 to 99 form a helical membrane-spanning segment; sequence TSIILASAVWYMVYYFPYDL. Over 100–102 the chain is Cytoplasmic; it reads FYN. A helical transmembrane segment spans residues 103 to 121; it reads CFFFLPIRLILAGMKEVTR. A 1,2-diacyl-sn-glycero-3-phospho-(1D-myo-inositol-4,5-bisphosphate)-binding residues include Lys-117 and Arg-121. At 122–139 the chain is on the lumenal side; that stretch reads TWKILSGVAHAHSHYKDA. The chain crosses the membrane as a helical span at residues 140–157; sequence MLVMITIGWARGAGGGLI. At 158–178 the chain is on the cytoplasmic side; the sequence is SNFEQLVRGVWKPESNEFLKM. Residues 179-196 form a helical membrane-spanning segment; the sequence is SYPVKVTLIGAVLFTLQH. Residues 197–204 are Lumenal-facing; that stretch reads GQYLPISR. The chain crosses the membrane as a helical span at residues 205-225; that stretch reads HNLMFIYTLFLILIKVTMMLT. At 226–284 the chain is on the cytoplasmic side; sequence RSTASPFLPLETSLQHILFSRQQIPAEVRESPSSSGDKGKPSKKTLDKDSGEQDNKKDN. The segment at 250–284 is disordered; that stretch reads PAEVRESPSSSGDKGKPSKKTLDKDSGEQDNKKDN. Over residues 262-284 the composition is skewed to basic and acidic residues; the sequence is DKGKPSKKTLDKDSGEQDNKKDN.

The protein belongs to the TMEM38 family. As to quaternary structure, homotrimer; conformation seems to be controled by binding to diacylglycerol (DAG).

It is found in the endoplasmic reticulum membrane. It catalyses the reaction K(+)(in) = K(+)(out). Channel activity is activated by increased cytosolic Ca(2+) levels and blocked by luminal high Ca(2+) levels. In terms of biological role, intracellular monovalent cation channel required for maintenance of rapid intracellular calcium release. Acts as a potassium counter-ion channel that functions in synchronization with calcium release from intracellular stores. Activated by increased cytosolic Ca(2+) levels. The sequence is that of Trimeric intracellular cation channel type B (tmem38b) from Xenopus tropicalis (Western clawed frog).